The following is a 120-amino-acid chain: Basic phospholipase A2 homolog piratoxin-3 (120 aa).

Intrachain disulfides connect Cys26–Cys113, Cys28–Cys44, Cys43–Cys94, Cys49–Cys120, Cys50–Cys87, Cys57–Cys81, and Cys75–Cys85. An important for membrane-damaging activities in eukaryotes and bacteria; heparin-binding region spans residues 104–115 (KKYRYHLKPCKK).

Belongs to the phospholipase A2 family. Group II subfamily. D49 sub-subfamily. In terms of assembly, homodimer; non-covalently linked (probable alternative/compact dimer conformation). Expressed by the venom gland.

The protein localises to the secreted. Snake venom phospholipase A2 (PLA2) that lacks enzymatic activity. Shows high myotoxin activities. Also has anticoagulant activity. A model of myotoxic mechanism has been proposed: an apo Lys49-PLA2 is activated by the entrance of a hydrophobic molecule (e.g. fatty acid) at the hydrophobic channel of the protein leading to a reorientation of a monomer. This reorientation causes a transition between 'inactive' to 'active' states, causing alignment of C-terminal and membrane-docking sites (MDoS) side-by-side and putting the membrane-disruption sites (MDiS) in the same plane, exposed to solvent and in a symmetric position for both monomers. The MDoS region stabilizes the toxin on membrane by the interaction of charged residues with phospholipid head groups. Subsequently, the MDiS region destabilizes the membrane with penetration of hydrophobic residues. This insertion causes a disorganization of the membrane, allowing an uncontrolled influx of ions (i.e. calcium and sodium), and eventually triggering irreversible intracellular alterations and cell death. The polypeptide is Basic phospholipase A2 homolog piratoxin-3 (Bothrops pirajai (Piraja's lancehead)).